Consider the following 236-residue polypeptide: Apoptosis regulator Bcl-2 (236 aa).

The short motif at 10 to 30 (DNREIVMKYIHYKLSQRGYEW) is the BH4 element. The residue at position 69 (T69) is a Phosphothreonine; by MAPK8. Residue S70 is modified to Phosphoserine; by MAPK8 and PKC. A Phosphoserine; by MAPK8 modification is found at S84. The BH3 signature appears at 90–104 (VHLTLRRAGDDFSRR). The short motif at 133-152 (ELFRDGVNWGRIVAFFEFGG) is the BH1 element. The BH2 signature appears at 184 to 199 (TWIQDNGGWDAFVELY). The chain crosses the membrane as a helical span at residues 209-230 (FSWLSLKALLSLALVGACITLG).

This sequence belongs to the Bcl-2 family. In terms of assembly, forms homodimers, and heterodimers with BAX, BAD, BAK and Bcl-X(L). Heterodimerization with BAX requires intact BH1 and BH2 motifs, and is necessary for anti-apoptotic activity. Component of the complex, at least composed of LRPPRC, BECN1 and BCL2; the interactions prevent BECN1 from forming an autophagy-inducing complex with PIK3C3. Interacts with EI24. Also interacts with APAF1, BBC3, BCL2L1, BNIPL, MRPL41 and TP53BP2. Binding to FKBP8 seems to target BCL2 to the mitochondria and probably interferes with the binding of BCL2 to its targets. Interacts with BAG1 in an ATP-dependent manner. Interacts with RAF1 (the 'Ser-338' and 'Ser-339' phosphorylated form). Interacts (via the BH4 domain) with EGLN3; the interaction prevents the formation of the BAX-BCL2 complex and inhibits the anti-apoptotic activity of BCL2. Interacts with G0S2; this interaction also prevents the formation of the anti-apoptotic BAX-BCL2 complex. Interacts with RTL10/BOP. Interacts with the SCF(FBXO10) complex. Interacts (via the loop between motifs BH4 and BH3) with NLRP1 (via LRR repeats), but not with NLRP2, NLRP3, NLRP4, PYCARD, nor MEFV. Interacts with GIMAP3/IAN4, GIMAP4/IAN1 and GIMAP5/IAN5. Interacts with BCAP31. Interacts with IRF3; the interaction is inhibited by Sendai virus infection. Interacts with BECN1; thereby inhibiting autophagy in non-starvation conditions. Interacts with AMBRA1; thereby inhibiting autophagy. Post-translationally, phosphorylation/dephosphorylation on Ser-70 regulates anti-apoptotic activity. Growth factor-stimulated phosphorylation on Ser-70 by PKC is required for the anti-apoptosis activity and occurs during the G2/M phase of the cell cycle. In the absence of growth factors, BCL2 appears to be phosphorylated by other protein kinases such as ERKs and stress-activated kinases. Phosphorylated by MAPK8/JNK1 at Thr-69, Ser-70 and Ser-84, which stimulates starvation-induced autophagy. Dephosphorylated by protein phosphatase 2A (PP2A). Proteolytically cleaved by caspases during apoptosis. The cleaved protein, lacking the BH4 motif, has pro-apoptotic activity, causes the release of cytochrome c into the cytosol promoting further caspase activity. In terms of processing, monoubiquitinated by PRKN, leading to an increase in its stability. Ubiquitinated by SCF(FBXO10), leading to its degradation by the proteasome.

The protein resides in the mitochondrion outer membrane. It localises to the nucleus membrane. It is found in the endoplasmic reticulum membrane. Its subcellular location is the cytoplasm. Its function is as follows. Suppresses apoptosis in a variety of cell systems including factor-dependent lymphohematopoietic and neural cells. Regulates cell death by controlling the mitochondrial membrane permeability. Appears to function in a feedback loop system with caspases. Inhibits caspase activity either by preventing the release of cytochrome c from the mitochondria and/or by binding to the apoptosis-activating factor (APAF-1). Also acts as an inhibitor of autophagy: interacts with BECN1 and AMBRA1 during non-starvation conditions and inhibits their autophagy function. May attenuate inflammation by impairing NLRP1-inflammasome activation, hence CASP1 activation and IL1B release. The chain is Apoptosis regulator Bcl-2 (BCL2) from Canis lupus familiaris (Dog).